The following is a 314-amino-acid chain: 3'-5' exoribonuclease YhaM (314 aa).

The HD domain occupies 163–279 (HVVSMLDLAK…LHYIDNLDAK (117 aa)).

This sequence belongs to the YhaM family.

In terms of biological role, shows a 3'-5' exoribonuclease activity. In Bacillus cereus (strain 03BB102), this protein is 3'-5' exoribonuclease YhaM.